The sequence spans 179 residues: Large ribosomal subunit protein uL6 (179 aa).

It belongs to the universal ribosomal protein uL6 family. Part of the 50S ribosomal subunit.

Functionally, this protein binds to the 23S rRNA, and is important in its secondary structure. It is located near the subunit interface in the base of the L7/L12 stalk, and near the tRNA binding site of the peptidyltransferase center. In Acidothermus cellulolyticus (strain ATCC 43068 / DSM 8971 / 11B), this protein is Large ribosomal subunit protein uL6.